The chain runs to 317 residues: uncharacterized protein (317 aa).

This sequence to M.avium MAV169.

This is an uncharacterized protein from Mycobacterium tuberculosis (strain CDC 1551 / Oshkosh).